A 271-amino-acid chain; its full sequence is Expansin-B1 (271 aa).

An N-terminal signal peptide occupies residues 1–24; that stretch reads MQLFPVILPTLCVFLHLLISGSGS. The Expansin-like EG45 domain occupies 58–169; the sequence is GGACGYGSLV…RRTACKYRGK (112 aa). Intrachain disulfides connect C61–C90, C93–C164, and C98–C104. Residues 182 to 263 form the Expansin-like CBD domain; the sequence is YWLSLLIEYE…NWVPKATYTS (82 aa). An N-linked (GlcNAc...) asparagine glycan is attached at N242.

Belongs to the expansin family. Expansin B subfamily.

The protein resides in the secreted. Its subcellular location is the cell wall. It localises to the membrane. Functionally, may cause loosening and extension of plant cell walls by disrupting non-covalent bonding between cellulose microfibrils and matrix glucans. No enzymatic activity has been found. In Arabidopsis thaliana (Mouse-ear cress), this protein is Expansin-B1 (EXPB1).